The chain runs to 155 residues: MRHNKSGRRLGRNSSHRAAMMRNMVTSLLEHEKITTTDARAKELRKVVDRMITLGKRGDLHARRQAIKVIQDRKVVGKLFELIAPRYTDRPGGYTRIIKLGNRLGDNAPQVIIELVEEEFTPRVRKAADDKAVAESVATEVAEATEAAADTKQAE.

This sequence belongs to the bacterial ribosomal protein bL17 family. As to quaternary structure, part of the 50S ribosomal subunit. Contacts protein L32.

This chain is Large ribosomal subunit protein bL17, found in Syntrophotalea carbinolica (strain DSM 2380 / NBRC 103641 / GraBd1) (Pelobacter carbinolicus).